Consider the following 362-residue polypeptide: Transcription factor bHLH128 (362 aa).

A compositionally biased stretch (low complexity) spans 1-16; it reads MYQSSSSTSSSSQRSS. Disordered regions lie at residues 1-23, 78-106, 120-140, and 162-184; these read MYQS…GGGL, SDST…SNKD, SQQH…YSLA, and LNQP…HSRL. Residues 78 to 96 are compositionally biased toward polar residues; sequence SDSTTCGVNNSSDGQKQLG. Residues 162–173 show a composition bias toward polar residues; that stretch reads LNQPTSDYSPQG. S189 is subject to Phosphoserine. In terms of domain architecture, bHLH spans 289-339; sequence CATHPRSIAERERRTRISGKLKKLQDLVPNMDKQTSYSDMLDLAVQHIKGL.

In terms of assembly, homodimer.

The protein localises to the nucleus. In Arabidopsis thaliana (Mouse-ear cress), this protein is Transcription factor bHLH128 (BHLH128).